The following is a 171-amino-acid chain: Ribosome maturation factor RimP (171 aa).

Belongs to the RimP family.

Its subcellular location is the cytoplasm. Required for maturation of 30S ribosomal subunits. The sequence is that of Ribosome maturation factor RimP from Anaeromyxobacter sp. (strain K).